The following is a 195-amino-acid chain: HTH-type transcriptional regulator BetI (195 aa).

An HTH tetR-type domain is found at 8-68 (PIRRQQLIEA…ATMRYLISHL (61 aa)). A DNA-binding region (H-T-H motif) is located at residues 31-50 (SIVQIARRAGVSNGIISHYF).

Its pathway is amine and polyamine biosynthesis; betaine biosynthesis via choline pathway [regulation]. In terms of biological role, repressor involved in the biosynthesis of the osmoprotectant glycine betaine. It represses transcription of the choline transporter BetT and the genes of BetAB involved in the synthesis of glycine betaine. The polypeptide is HTH-type transcriptional regulator BetI (Pectobacterium carotovorum subsp. carotovorum (strain PC1)).